The primary structure comprises 593 residues: Proteasome-associated ATPase (593 aa).

A coiled-coil region spans residues 5 to 94; sequence DDADSRAARW…KEEIDRLAQP (90 aa). 281-286 serves as a coordination point for ATP; the sequence is GCGKTL. Residues 574 to 593 are disordered; that stretch reads GKGADAGRSIETASNTGQYL. A compositionally biased stretch (polar residues) spans 584 to 593; that stretch reads ETASNTGQYL. Residues 592–593 form a docks into pockets in the proteasome alpha-ring region; that stretch reads YL.

It belongs to the AAA ATPase family. In terms of assembly, homohexamer. Assembles into a hexameric ring structure that caps the 20S proteasome core. Strongly interacts with the prokaryotic ubiquitin-like protein Pup through a hydrophobic interface; the interacting region of ARC lies in its N-terminal coiled-coil domain. There is one Pup binding site per ARC hexamer ring. Upon ATP-binding, the C-terminus of ARC interacts with the alpha-rings of the proteasome core, possibly by binding to the intersubunit pockets.

The protein operates within protein degradation; proteasomal Pup-dependent pathway. Its function is as follows. ATPase which is responsible for recognizing, binding, unfolding and translocation of pupylated proteins into the bacterial 20S proteasome core particle. May be essential for opening the gate of the 20S proteasome via an interaction with its C-terminus, thereby allowing substrate entry and access to the site of proteolysis. Thus, the C-termini of the proteasomal ATPase may function like a 'key in a lock' to induce gate opening and therefore regulate proteolysis. The sequence is that of Proteasome-associated ATPase from Salinispora arenicola (strain CNS-205).